Reading from the N-terminus, the 436-residue chain is Hydrogenobyrinate a,c-diamide synthase (436 aa).

The GATase cobBQ-type domain maps to 244–435 (RIAVARDDAF…MHVIDFSGEA (192 aa)). Catalysis depends on Cys327, which acts as the Nucleophile.

The protein belongs to the CobB/CbiA family. Mg(2+) serves as cofactor.

It carries out the reaction hydrogenobyrinate + 2 L-glutamine + 2 ATP + 2 H2O = hydrogenobyrinate a,c-diamide + 2 L-glutamate + 2 ADP + 2 phosphate + 2 H(+). It functions in the pathway cofactor biosynthesis; adenosylcobalamin biosynthesis; cob(II)yrinate a,c-diamide from precorrin-2 (aerobic route): step 9/10. Its function is as follows. Catalyzes the ATP-dependent amidation of the two carboxylate groups at positions a and c of hydrogenobyrinate, using either L-glutamine or ammonia as the nitrogen source. The polypeptide is Hydrogenobyrinate a,c-diamide synthase (Brucella suis biovar 1 (strain 1330)).